The primary structure comprises 696 residues: Polyribonucleotide nucleotidyltransferase (696 aa).

Aspartate 489 and aspartate 495 together coordinate Mg(2+). Residues 556–615 (PQYVTMKINPEKIRDVIGKGGVVIREITEATNCAIDISDDGTIKIAAHTTEEGEAAKRRI) enclose the KH domain. Positions 625 to 693 (GKVYEGTVVK…RQGRVRLSMK (69 aa)) constitute an S1 motif domain.

Belongs to the polyribonucleotide nucleotidyltransferase family. As to quaternary structure, component of the RNA degradosome, which is a multiprotein complex involved in RNA processing and mRNA degradation. Mg(2+) serves as cofactor.

It is found in the cytoplasm. It carries out the reaction RNA(n+1) + phosphate = RNA(n) + a ribonucleoside 5'-diphosphate. Functionally, involved in mRNA degradation. Catalyzes the phosphorolysis of single-stranded polyribonucleotides processively in the 3'- to 5'-direction. The polypeptide is Polyribonucleotide nucleotidyltransferase (Coxiella burnetii (strain CbuG_Q212) (Coxiella burnetii (strain Q212))).